Consider the following 425-residue polypeptide: Serine--tRNA ligase (425 aa).

Residue 233-235 (TAE) participates in L-serine binding. 264–266 (RRE) contacts ATP. Residue Glu-287 coordinates L-serine. 351 to 354 (EISS) is an ATP binding site. Ser-387 lines the L-serine pocket.

This sequence belongs to the class-II aminoacyl-tRNA synthetase family. Type-1 seryl-tRNA synthetase subfamily. As to quaternary structure, homodimer. The tRNA molecule binds across the dimer.

Its subcellular location is the cytoplasm. It catalyses the reaction tRNA(Ser) + L-serine + ATP = L-seryl-tRNA(Ser) + AMP + diphosphate + H(+). It carries out the reaction tRNA(Sec) + L-serine + ATP = L-seryl-tRNA(Sec) + AMP + diphosphate + H(+). It functions in the pathway aminoacyl-tRNA biosynthesis; selenocysteinyl-tRNA(Sec) biosynthesis; L-seryl-tRNA(Sec) from L-serine and tRNA(Sec): step 1/1. Its function is as follows. Catalyzes the attachment of serine to tRNA(Ser). Is also able to aminoacylate tRNA(Sec) with serine, to form the misacylated tRNA L-seryl-tRNA(Sec), which will be further converted into selenocysteinyl-tRNA(Sec). The protein is Serine--tRNA ligase of Thermotoga petrophila (strain ATCC BAA-488 / DSM 13995 / JCM 10881 / RKU-1).